The primary structure comprises 486 residues: Galactose-1-phosphate uridylyltransferase (486 aa).

The protein belongs to the galactose-1-phosphate uridylyltransferase type 2 family.

It is found in the cytoplasm. The catalysed reaction is alpha-D-galactose 1-phosphate + UDP-alpha-D-glucose = alpha-D-glucose 1-phosphate + UDP-alpha-D-galactose. It participates in carbohydrate metabolism; galactose metabolism. This chain is Galactose-1-phosphate uridylyltransferase, found in Lacticaseibacillus paracasei (strain ATCC 334 / BCRC 17002 / CCUG 31169 / CIP 107868 / KCTC 3260 / NRRL B-441) (Lactobacillus paracasei).